The sequence spans 123 residues: uncharacterized protein (123 aa).

A helical membrane pass occupies residues 34-53 (LPFFFLFLGNLGKFFFLWPL).

The protein resides in the membrane. This is an uncharacterized protein from Saccharomyces cerevisiae (strain ATCC 204508 / S288c) (Baker's yeast).